Reading from the N-terminus, the 1314-residue chain is Angiotensin-converting enzyme (1314 aa).

The first 35 residues, 1-35, serve as a signal peptide directing secretion; that stretch reads MGAASGQRGQGPPSPLLLLWLSLLLLLLPPSPAPA. Over 36-1265 the chain is Extracellular; it reads LDPGLQPGNF…LEPQQARVGQ (1230 aa). N-linked (GlcNAc...) asparagine glycosylation is found at asparagine 44, asparagine 60, asparagine 80, asparagine 117, and asparagine 166. Peptidase M2 domains are found at residues 46–630 and 649–1228; these read SADE…LGWP and VTDE…LGWP. Cysteines 163 and 171 form a disulfide. Residue tyrosine 237 participates in chloride binding. N-linked (GlcNAc...) asparagine glycosylation occurs at asparagine 324. A disulfide bond links cysteine 365 and cysteine 383. Histidine 396 provides a ligand contact to Zn(2+). Catalysis depends on glutamate 397, which acts as the Proton acceptor 1. Zn(2+)-binding residues include histidine 400 and glutamate 424. Asparagine 515 carries N-linked (GlcNAc...) asparagine glycosylation. The active-site Proton donor 1 is the histidine 526. Residue arginine 535 participates in chloride binding. Cysteine 551 and cysteine 563 are joined by a disulfide. 4 N-linked (GlcNAc...) asparagine glycosylation sites follow: asparagine 683, asparagine 701, asparagine 720, and asparagine 766. Cysteine 763 and cysteine 769 are disulfide-bonded. Arginine 797 and tyrosine 835 together coordinate chloride. The N-linked (GlcNAc...) asparagine glycan is linked to asparagine 948. Cysteine 963 and cysteine 981 are oxidised to a cystine. Histidine 994 is a Zn(2+) binding site. Residue glutamate 995 is the Proton acceptor 2 of the active site. Zn(2+) is bound by residues histidine 998 and glutamate 1022. Residues tryptophan 1096 and arginine 1100 each coordinate chloride. Histidine 1124 serves as the catalytic Proton donor 2. Arginine 1133 lines the chloride pocket. The cysteines at positions 1149 and 1161 are disulfide-linked. An N-linked (GlcNAc...) asparagine glycan is attached at asparagine 1197. The tract at residues 1221–1262 is juxtamembrane stalk; it reads HGETLGWPEYNWTPNTARSEGPFPESGRVNFLGMYLEPQQAR. Residues 1266–1282 form a helical membrane-spanning segment; it reads WVLLFLGVSLLVATLGL. The Cytoplasmic segment spans residues 1283–1314; sequence THRLFSIRQHGHSLHRPHRGPQFGSEVELRHS. The tract at residues 1293 to 1314 is disordered; that stretch reads GHSLHRPHRGPQFGSEVELRHS. Position 1307 is a phosphoserine (serine 1307).

The protein belongs to the peptidase M2 family. In terms of assembly, monomer and homodimer; homodimerizes following binding to an inhibitor. Interacts with calmodulin (CALM1, CALM2 or CALM3); interaction takes place in the cytoplasmic region and regulates phosphorylation and proteolytic cleavage. It depends on Zn(2+) as a cofactor. Requires chloride as cofactor. Post-translationally, produced following proteolytic cleavage by secretase enzymes that cleave the transmembrane form in the juxtamembrane stalk region upstream of the transmembrane region. Cleavage can take place at different sites of the juxtamembrane stalk region. Phosphorylated by CK2 on Ser-1307; which allows membrane retention. Phosphorylated on tyrosine residues on its extracellular part, promoting cleavage by secretase enzymes and formation of the soluble form (Angiotensin-converting enzyme, soluble form). Widely expressed with dominant expression in lung and kidney.

It is found in the cell membrane. Its subcellular location is the cytoplasm. The protein localises to the secreted. The enzyme catalyses Release of a C-terminal dipeptide, oligopeptide-|-Xaa-Yaa, when Xaa is not Pro, and Yaa is neither Asp nor Glu. Thus, conversion of angiotensin I to angiotensin II, with increase in vasoconstrictor activity, but no action on angiotensin II.. The catalysed reaction is angiotensin I + H2O = L-histidyl-L-leucine + angiotensin II. It catalyses the reaction bradykinin + H2O = L-Phe-L-Arg + bradykinin(1-7). It carries out the reaction substance P + H2O = substance P(1-9) + L-Leu-L-Met-NH2. The enzyme catalyses substance P + H2O = substance P(1-8) + Gly-L-Leu-L-Met-NH2. The catalysed reaction is substance P + H2O = L-Phe-L-Phe-Gly-L-Leu-L-Met-NH2 + substance P(1-6). It catalyses the reaction neurotensin + H2O = neurotensin(1-11) + L-isoleucyl-L-leucine. It carries out the reaction goralatide + H2O = N-acetyl-L-seryl-L-aspartate + L-lysyl-L-proline. The enzyme catalyses Met-enkephalin + H2O = L-phenylalanyl-L-methionine + L-tyrosylglycylglycine. The catalysed reaction is Leu-enkephalin + H2O = L-tyrosylglycylglycine + L-phenylalanyl-L-leucine. It catalyses the reaction Met-enkephalin-Arg-Phe + H2O = L-arginyl-L-phenylalanine + Met-enkephalin. Its activity is regulated as follows. The dipeptidyl carboxypeptidase activity is strongly activated by chloride. The dipeptidyl carboxypeptidase activity is specifically inhibited by lisinopril, captopril and enalaprilat. With respect to regulation, strongly inhibited by lisinopril and captopril. Its function is as follows. Dipeptidyl carboxypeptidase that removes dipeptides from the C-terminus of a variety of circulating hormones, such as angiotensin I, bradykinin or enkephalins, thereby playing a key role in the regulation of blood pressure, electrolyte homeostasis or synaptic plasticity. Composed of two similar catalytic domains, each possessing a functional active site, with different selectivity for substrates. Plays a major role in the angiotensin-renin system that regulates blood pressure and sodium retention by the kidney by converting angiotensin I to angiotensin II, resulting in an increase of the vasoconstrictor activity of angiotensin. Also able to inactivate bradykinin, a potent vasodilator, and therefore enhance the blood pressure response. Acts as a regulator of synaptic transmission by mediating cleavage of neuropeptide hormones, such as substance P, neurotensin or enkephalins. Catalyzes degradation of different enkephalin neuropeptides (Met-enkephalin, Leu-enkephalin, Met-enkephalin-Arg-Phe and possibly Met-enkephalin-Arg-Gly-Leu). Acts as a regulator of synaptic plasticity in the nucleus accumbens of the brain by mediating cleavage of Met-enkephalin-Arg-Phe, a strong ligand of Mu-type opioid receptor OPRM1, into Met-enkephalin. Met-enkephalin-Arg-Phe cleavage by ACE decreases activation of OPRM1, leading to long-term synaptic potentiation of glutamate release. Also acts as a regulator of hematopoietic stem cell differentiation by mediating degradation of hemoregulatory peptide N-acetyl-SDKP (AcSDKP). Acts as a regulator of cannabinoid signaling pathway by mediating degradation of hemopressin, an antagonist peptide of the cannabinoid receptor CNR1. Involved in amyloid-beta metabolism by catalyzing degradation of Amyloid-beta protein 40 and Amyloid-beta protein 42 peptides, thereby preventing plaque formation. Catalyzes cleavage of cholecystokinin (maturation of Cholecystokinin-8 and Cholecystokinin-5) and Gonadoliberin-1 (both maturation and degradation) hormones. Degradation of hemoregulatory peptide N-acetyl-SDKP (AcSDKP) and amyloid-beta proteins is mediated by the N-terminal catalytic domain, while angiotensin I and cholecystokinin cleavage is mediated by the C-terminal catalytic region. In terms of biological role, soluble form that is released in blood plasma and other body fluids following proteolytic cleavage in the juxtamembrane stalk region. Functionally, isoform produced by alternative promoter usage that is specifically expressed in spermatocytes and adult testis, and which is required for male fertility. In contrast to somatic isoforms, only contains one catalytic domain. Acts as a dipeptidyl carboxypeptidase that removes dipeptides from the C-terminus of substrates. The identity of substrates that are needed for male fertility is unknown. May also have a glycosidase activity which releases GPI-anchored proteins from the membrane by cleaving the mannose linkage in the GPI moiety. The GPIase activity was reported to be essential for the egg-binding ability of the sperm. This activity is however unclear and has been challenged by other groups, suggesting that it may be indirect. The sequence is that of Angiotensin-converting enzyme from Mesocricetus auratus (Golden hamster).